Here is a 151-residue protein sequence, read N- to C-terminus: Globin CTT-X (151 aa).

The region spanning 6–150 is the Globin domain; that stretch reads TLDAHEVEQV…AFSVIFEVLE (145 aa). Residues H64 and H99 each contribute to the heme b site.

The protein belongs to the globin family. As to quaternary structure, homodimer.

The sequence is that of Globin CTT-X (CTT-10) from Chironomus thummi thummi (Midge).